Reading from the N-terminus, the 780-residue chain is Heat shock protein 90-5, chloroplastic (780 aa).

The transit peptide at 1 to 60 (MAPALSRSLYTSPLTSVPITPVSSRLSHLRSSFLPHGGALRTGVSCSWNLEKRCNRFAVK) directs the protein to the chloroplast. Residues Glu-106, Asn-110, Asp-152, Met-157, 172 to 173 (SG), 196 to 201 (QFGVGF), Thr-251, and Arg-441 each bind ATP. The tract at residues 742 to 780 (GRVEEEEESSTVNEGDDKSGETEVVEPSEVRAESDPWQD) is disordered. The span at 769-780 (SEVRAESDPWQD) shows a compositional bias: basic and acidic residues.

This sequence belongs to the heat shock protein 90 family. In terms of assembly, homodimer. Interacts with VIPP1. Interacts with P23-1. Expressed in roots, cotyledons, young leaves, mature leaves, stems, flowers, petals and siliques.

It localises to the plastid. Its subcellular location is the chloroplast stroma. In terms of biological role, molecular chaperone required for chloroplast biogenesis. Essential for chloroplast biogenesis and maintenance, and thus for embryogenesis. May be involved in the disassembly of VIPP1 for thylakoid membrane formation and/or maintenance. Cooperates with TIC components and other molecular chaperones to drive transport of preproteins into chloroplasts and functions in the chloroplast stroma to facilitate membrane translocation during protein import into the organelle. This is Heat shock protein 90-5, chloroplastic from Arabidopsis thaliana (Mouse-ear cress).